The primary structure comprises 887 residues: Tiger protein O1 (887 aa).

The first 21 residues, 1 to 21 (MEKKLLIIVIVFLFSTIQVFC), serve as a signal peptide directing secretion. Over 22–845 (RIDDKTFVIS…SLSKKSIILL (824 aa)) the chain is Extracellular. Asn32, Asn70, Asn186, Asn207, Asn219, Asn259, Asn297, Asn314, Asn325, Asn338, Asn354, Asn393, Asn431, Asn588, Asn629, Asn652, Asn687, Asn710, Asn720, Asn730, Asn775, Asn788, Asn811, and Asn816 each carry an N-linked (GlcNAc...) asparagine glycan. Positions 277 to 365 (NSVPYSKGGL…TNENKLLFNY (89 aa)) constitute an IPT/TIG 1 domain. In terms of domain architecture, IPT/TIG 2 spans 710–767 (NTSSINVNGGNLTIYGKNFYNVSNIKVEVDNQLKCNKIEFINLNSLTCFLPPFIETLF). A disordered region spans residues 811–835 (NDTSENSTNDILNHEKNNNNQKDGS). The helical transmembrane segment at 846-866 (SILLPSFIILIVSLAIVILVI) threads the bilayer. At 867–887 (KRNKTKHSKNMSSKEKELMKQ) the chain is on the cytoplasmic side.

Its subcellular location is the membrane. This Dictyostelium discoideum (Social amoeba) protein is Tiger protein O1 (tgrO1).